A 314-amino-acid chain; its full sequence is Prohormone-3 (314 aa).

Residues 1-19 (MGRVLLSASSLLLHIQVFT) form the signal peptide. The chain crosses the membrane as a helical span at residues 90–112 (YTCVALTVVALVSTMHFGVEAWG).

It is found in the membrane. In Apis mellifera (Honeybee), this protein is Prohormone-3.